Consider the following 301-residue polypeptide: Putative phosphoenolpyruvate synthase regulatory protein (301 aa).

Positions 1–24 (MSEPVAPDGAQPAPAGATPQPLQP) are enriched in low complexity. The interval 1-27 (MSEPVAPDGAQPAPAGATPQPLQPIAG) is disordered. 181 to 188 (GVSRSGKT) serves as a coordination point for ADP.

This sequence belongs to the pyruvate, phosphate/water dikinase regulatory protein family. PSRP subfamily.

It catalyses the reaction [pyruvate, water dikinase] + ADP = [pyruvate, water dikinase]-phosphate + AMP + H(+). The enzyme catalyses [pyruvate, water dikinase]-phosphate + phosphate + H(+) = [pyruvate, water dikinase] + diphosphate. In terms of biological role, bifunctional serine/threonine kinase and phosphorylase involved in the regulation of the phosphoenolpyruvate synthase (PEPS) by catalyzing its phosphorylation/dephosphorylation. This is Putative phosphoenolpyruvate synthase regulatory protein from Cupriavidus pinatubonensis (strain JMP 134 / LMG 1197) (Cupriavidus necator (strain JMP 134)).